We begin with the raw amino-acid sequence, 511 residues long: Serine hydroxymethyltransferase (511 aa).

Lys287 carries the post-translational modification N6-(pyridoxal phosphate)lysine.

Belongs to the SHMT family. In terms of assembly, homotetramer. The cofactor is pyridoxal 5'-phosphate.

It catalyses the reaction (6R)-5,10-methylene-5,6,7,8-tetrahydrofolate + glycine + H2O = (6S)-5,6,7,8-tetrahydrofolate + L-serine. The protein operates within one-carbon metabolism; tetrahydrofolate interconversion. Interconversion of serine and glycine. The sequence is that of Serine hydroxymethyltransferase from Caenorhabditis briggsae.